We begin with the raw amino-acid sequence, 240 residues long: Chloroplastic group IIB intron splicing facilitator CRS2-B, chloroplastic (240 aa).

This sequence belongs to the PTH family. CRS2 subfamily. As to quaternary structure, part of large ribonucleo-protein complexes that include group IIB introns and either CAF1 or CAF2.

It localises to the plastid. The protein resides in the chloroplast stroma. Functionally, required for the splicing of group IIB introns in chloroplasts. This is Chloroplastic group IIB intron splicing facilitator CRS2-B, chloroplastic (CRS2B) from Arabidopsis thaliana (Mouse-ear cress).